We begin with the raw amino-acid sequence, 290 residues long: MMRIFLFLATNLAVLVIASITLKLLGVDRYTGQNYGSLLVFCAVFGFAGSLISLFISKWMAKMSTRTEIISQPRTRHEQWLLQTVEQLSREAGIKMPEVGIFPAYEANAFATGWNRNDALVAVSQGLLERFSPDEVRAVLAHEIGHVANGDMVTLALIQGVVNTFVMFFARIFGNFVDKAILKNEDGHGIGYFVATIFAELVLGILASIIVMWFSRKREYRADEAGAQLAGTSAMIGALQRLRAEQGLPVHMPDSLKAFGINGSLKHGMAGLFMTHPSLEDRIEALRQRG.

Helical transmembrane passes span 4-24 and 36-56; these read IFLF…TLKL and GSLL…SLFI. His142 lines the Zn(2+) pocket. Glu143 is an active-site residue. His146 provides a ligand contact to Zn(2+). Transmembrane regions (helical) follow at residues 150-170 and 193-213; these read GDMV…MFFA and FVAT…IVMW. A Zn(2+)-binding site is contributed by Glu219.

This sequence belongs to the peptidase M48B family. The cofactor is Zn(2+).

It is found in the cell inner membrane. The sequence is that of Protease HtpX from Stutzerimonas stutzeri (strain A1501) (Pseudomonas stutzeri).